A 500-amino-acid polypeptide reads, in one-letter code: Bifunctional protein GlmU (500 aa).

The interval 1–242 (MPVQTAVVVL…SAKVAGANDR (242 aa)) is pyrophosphorylase. Residues 10 to 13 (LAAG), lysine 24, glutamine 81, and 86 to 87 (GT) each bind UDP-N-acetyl-alpha-D-glucosamine. Mg(2+) is bound at residue aspartate 112. Glycine 151, glutamate 167, asparagine 182, and asparagine 240 together coordinate UDP-N-acetyl-alpha-D-glucosamine. Position 240 (asparagine 240) interacts with Mg(2+). The segment at 243–263 (VQLSRLAAELNRRTVENWMRA) is linker. The segment at 264–500 (GVTVVDPSTT…KQDLKDGIEQ (237 aa)) is N-acetyltransferase. The UDP-N-acetyl-alpha-D-glucosamine site is built by arginine 345 and lysine 363. Histidine 375 functions as the Proton acceptor in the catalytic mechanism. Tyrosine 378 and asparagine 389 together coordinate UDP-N-acetyl-alpha-D-glucosamine. Residues alanine 392, 398–399 (NY), serine 417, and alanine 435 each bind acetyl-CoA. The segment at 472–500 (AEAAAAAGLHHSSDLHETEKQDLKDGIEQ) is disordered. The span at 482–500 (HSSDLHETEKQDLKDGIEQ) shows a compositional bias: basic and acidic residues.

The protein in the N-terminal section; belongs to the N-acetylglucosamine-1-phosphate uridyltransferase family. In the C-terminal section; belongs to the transferase hexapeptide repeat family. In terms of assembly, homotrimer. The cofactor is Mg(2+).

It is found in the cytoplasm. The catalysed reaction is alpha-D-glucosamine 1-phosphate + acetyl-CoA = N-acetyl-alpha-D-glucosamine 1-phosphate + CoA + H(+). The enzyme catalyses N-acetyl-alpha-D-glucosamine 1-phosphate + UTP + H(+) = UDP-N-acetyl-alpha-D-glucosamine + diphosphate. Its pathway is nucleotide-sugar biosynthesis; UDP-N-acetyl-alpha-D-glucosamine biosynthesis; N-acetyl-alpha-D-glucosamine 1-phosphate from alpha-D-glucosamine 6-phosphate (route II): step 2/2. It functions in the pathway nucleotide-sugar biosynthesis; UDP-N-acetyl-alpha-D-glucosamine biosynthesis; UDP-N-acetyl-alpha-D-glucosamine from N-acetyl-alpha-D-glucosamine 1-phosphate: step 1/1. The protein operates within bacterial outer membrane biogenesis; LPS lipid A biosynthesis. Catalyzes the last two sequential reactions in the de novo biosynthetic pathway for UDP-N-acetylglucosamine (UDP-GlcNAc). The C-terminal domain catalyzes the transfer of acetyl group from acetyl coenzyme A to glucosamine-1-phosphate (GlcN-1-P) to produce N-acetylglucosamine-1-phosphate (GlcNAc-1-P), which is converted into UDP-GlcNAc by the transfer of uridine 5-monophosphate (from uridine 5-triphosphate), a reaction catalyzed by the N-terminal domain. In Rhodococcus jostii (strain RHA1), this protein is Bifunctional protein GlmU.